A 1234-amino-acid polypeptide reads, in one-letter code: 1-phosphatidylinositol 4,5-bisphosphate phosphodiesterase beta-3 (1234 aa).

Ala-2 bears the N-acetylalanine mark. The 152-residue stretch at 315–466 (MDMTQPLSAY…LMGRILVKNK (152 aa)) folds into the PI-PLC X-box domain. Residues His-330 and His-377 contribute to the active site. The disordered stretch occupies residues 465-586 (NKKRHRPSTG…GTASSEVNAT (122 aa)). A phosphoserine mark is found at Ser-472, Ser-488, Ser-493, and Ser-535. The span at 486 to 513 (EQSNSALSESSAATEPSSPQLGSPSSDS) shows a compositional bias: low complexity. Residues 554–566 (REDEEEDEEEEET) are compositionally biased toward acidic residues. The segment covering 577–586 (GTASSEVNAT) has biased composition (polar residues). The PI-PLC Y-box domain maps to 589-705 (MSTLVNYVEP…GYLLKPEFMR (117 aa)). Residues 706 to 834 (RPDKSFDPFT…RNEANQPLCL (129 aa)) form the C2 domain. Residues 886-907 (ASTEMCQETPSQQQGSQLSSNP) show a composition bias toward polar residues. The interval 886–936 (ASTEMCQETPSQQQGSQLSSNPVPNPLDDSPRWPPGPTTSPTSTSLSSPGQ) is disordered. Over residues 924-934 (TSPTSTSLSSP) the composition is skewed to low complexity. 2 positions are modified to phosphoserine: Ser-925 and Ser-1105. The disordered stretch occupies residues 1196–1234 (SEGLGDGPLVACASNGHAAGSGGHQSGADSESQEENTQL). The segment at 1231 to 1234 (NTQL) is interaction with SHANK2.

Interacts with LPAR2. Interacts with SHANK2. The cofactor is Ca(2+). Expressed in parotid gland, brain, liver, uterus, lung, heart, adrenal gland, and ovary. Not detected in spleen, pancreas, intestine, thymus or kidney.

The protein localises to the cytoplasm. Its subcellular location is the membrane. It localises to the nucleus. It catalyses the reaction a 1,2-diacyl-sn-glycero-3-phospho-(1D-myo-inositol-4,5-bisphosphate) + H2O = 1D-myo-inositol 1,4,5-trisphosphate + a 1,2-diacyl-sn-glycerol + H(+). It carries out the reaction a 1,2-diacyl-sn-glycero-3-phospho-(1D-myo-inositol) + H2O = 1D-myo-inositol 1-phosphate + a 1,2-diacyl-sn-glycerol + H(+). Activated by G(q)/G(11) G alpha proteins in response to ligand-binding to G protein-coupled receptors. Functionally, catalyzes the production of the second messenger molecules diacylglycerol (DAG) and inositol 1,4,5-trisphosphate (IP3). Key transducer of G protein-coupled receptor signaling: activated by G(q)/G(11) G alpha proteins downstream of G protein-coupled receptors activation. In neutrophils, participates in a phospholipase C-activating N-formyl peptide-activated GPCR (G protein-coupled receptor) signaling pathway by promoting RASGRP4 activation by DAG, to promote neutrophil functional responses. The polypeptide is 1-phosphatidylinositol 4,5-bisphosphate phosphodiesterase beta-3 (Rattus norvegicus (Rat)).